We begin with the raw amino-acid sequence, 316 residues long: 4-hydroxy-3-methylbut-2-enyl diphosphate reductase (316 aa).

C12 is a [4Fe-4S] cluster binding site. (2E)-4-hydroxy-3-methylbut-2-enyl diphosphate is bound by residues H41 and H74. Residues H41 and H74 each coordinate dimethylallyl diphosphate. Positions 41 and 74 each coordinate isopentenyl diphosphate. C96 is a binding site for [4Fe-4S] cluster. (2E)-4-hydroxy-3-methylbut-2-enyl diphosphate is bound at residue H124. H124 serves as a coordination point for dimethylallyl diphosphate. H124 contributes to the isopentenyl diphosphate binding site. The Proton donor role is filled by E126. T168 contributes to the (2E)-4-hydroxy-3-methylbut-2-enyl diphosphate binding site. C198 lines the [4Fe-4S] cluster pocket. (2E)-4-hydroxy-3-methylbut-2-enyl diphosphate is bound by residues S226, S227, N228, and S270. Dimethylallyl diphosphate contacts are provided by S226, S227, N228, and S270. Positions 226, 227, 228, and 270 each coordinate isopentenyl diphosphate.

It belongs to the IspH family. [4Fe-4S] cluster serves as cofactor.

The catalysed reaction is isopentenyl diphosphate + 2 oxidized [2Fe-2S]-[ferredoxin] + H2O = (2E)-4-hydroxy-3-methylbut-2-enyl diphosphate + 2 reduced [2Fe-2S]-[ferredoxin] + 2 H(+). It carries out the reaction dimethylallyl diphosphate + 2 oxidized [2Fe-2S]-[ferredoxin] + H2O = (2E)-4-hydroxy-3-methylbut-2-enyl diphosphate + 2 reduced [2Fe-2S]-[ferredoxin] + 2 H(+). It participates in isoprenoid biosynthesis; dimethylallyl diphosphate biosynthesis; dimethylallyl diphosphate from (2E)-4-hydroxy-3-methylbutenyl diphosphate: step 1/1. It functions in the pathway isoprenoid biosynthesis; isopentenyl diphosphate biosynthesis via DXP pathway; isopentenyl diphosphate from 1-deoxy-D-xylulose 5-phosphate: step 6/6. Functionally, catalyzes the conversion of 1-hydroxy-2-methyl-2-(E)-butenyl 4-diphosphate (HMBPP) into a mixture of isopentenyl diphosphate (IPP) and dimethylallyl diphosphate (DMAPP). Acts in the terminal step of the DOXP/MEP pathway for isoprenoid precursor biosynthesis. This chain is 4-hydroxy-3-methylbut-2-enyl diphosphate reductase, found in Marinobacter nauticus (strain ATCC 700491 / DSM 11845 / VT8) (Marinobacter aquaeolei).